Reading from the N-terminus, the 702-residue chain is Ribosomal RNA large subunit methyltransferase K/L (702 aa).

The 112-residue stretch at 43–154 folds into the THUMP domain; the sequence is LVYQSLMWSR…KETASIALDL (112 aa).

Belongs to the methyltransferase superfamily. RlmKL family.

It localises to the cytoplasm. The enzyme catalyses guanosine(2445) in 23S rRNA + S-adenosyl-L-methionine = N(2)-methylguanosine(2445) in 23S rRNA + S-adenosyl-L-homocysteine + H(+). It catalyses the reaction guanosine(2069) in 23S rRNA + S-adenosyl-L-methionine = N(2)-methylguanosine(2069) in 23S rRNA + S-adenosyl-L-homocysteine + H(+). Specifically methylates the guanine in position 2445 (m2G2445) and the guanine in position 2069 (m7G2069) of 23S rRNA. This Shigella sonnei (strain Ss046) protein is Ribosomal RNA large subunit methyltransferase K/L.